Reading from the N-terminus, the 471-residue chain is V-type ATP synthase beta chain (471 aa).

This sequence belongs to the ATPase alpha/beta chains family.

Produces ATP from ADP in the presence of a proton gradient across the membrane. The V-type beta chain is a regulatory subunit. This chain is V-type ATP synthase beta chain, found in Streptococcus pyogenes serotype M12 (strain MGAS2096).